Consider the following 266-residue polypeptide: Putative carbamate hydrolase RutD (266 aa).

An AB hydrolase-1 domain is found at 14–119 (PVVVLSAGLG…LVNGWLSLSP (106 aa)).

It belongs to the AB hydrolase superfamily. Hydrolase RutD family.

The catalysed reaction is carbamate + 2 H(+) = NH4(+) + CO2. Functionally, involved in pyrimidine catabolism. May facilitate the hydrolysis of carbamate, a reaction that can also occur spontaneously. This is Putative carbamate hydrolase RutD from Klebsiella pneumoniae subsp. pneumoniae (strain ATCC 700721 / MGH 78578).